The primary structure comprises 1096 residues: Cation-transporting ATPase 5 (1096 aa).

The Cytoplasmic segment spans residues 1–19; that stretch reads MDSIELKQLVPENDSEPGT. A helical transmembrane segment spans residues 20–41; the sequence is PRQLLFQHYDISNEETIGIKPF. Residues 42–47 are Lumenal-facing; the sequence is KSIPAK. Residues 48–70 form a helical membrane-spanning segment; that stretch reads VYILRVTEILTLGLLHLILTWLP. The Cytoplasmic portion of the chain corresponds to 71–193; that stretch reads EFRLKWIEAP…LVSTKKSIVT (123 aa). The chain crosses the membrane as a helical span at residues 194–216; that stretch reads ILLNEVLHPFYLFQAVSVLIWLC. The Lumenal segment spans residues 217–220; the sequence is DSFV. Residues 221 to 238 form a helical membrane-spanning segment; it reads FYSCCIVFISSYSIFLSV. Over 239 to 391 the chain is Cytoplasmic; sequence KESKESENRI…NLRPSQLYLD (153 aa). The helical transmembrane segment at 392-412 threads the bilayer; that stretch reads SMSFLKTMAILSFVSIVFIAI. Residues 413 to 425 are Lumenal-facing; it reads YLNLYNASFGHVV. A helical transmembrane segment spans residues 426–447; it reads LRSLDVLTILVPPALPATLSVG. Over 448 to 895 the chain is Cytoplasmic; the sequence is IANSIARLSR…SLILSHRCFQ (448 aa). Aspartate 480 (4-aspartylphosphate intermediate) is an active-site residue. 2 residues coordinate Mg(2+): aspartate 838 and aspartate 842. A helical transmembrane segment spans residues 896–915; sequence YMVLCAIVQFSGVFFLYLKN. Residues 916-922 are Lumenal-facing; the sequence is YNFNDNQ. A helical membrane pass occupies residues 923–940; sequence FLFMDLLIIFPLSAAMSY. At 941–958 the chain is on the cytoplasmic side; sequence FDPAQNLTSNRPNSTLFG. The helical transmembrane segment at 959–982 threads the bilayer; that stretch reads KGRVKDLGIQSVLIWLSHGLLTLI. Over 983–1003 the chain is Lumenal; it reads LHELNWVELPEWQLEKSNTKN. Residues 1004 to 1026 traverse the membrane as a helical segment; that stretch reads VLVTSIFLLSSLQYLGICIGINQ. Residues 1027–1040 lie on the Cytoplasmic side of the membrane; it reads SSEFLSPIWKKKTY. A helical transmembrane segment spans residues 1041-1060; that stretch reads VCLCTTIGLCNIYLCFANEN. Over 1061 to 1075 the chain is Lumenal; it reads HIISRCLQITRLPTL. Residues 1076–1096 traverse the membrane as a helical segment; it reads YRFIILFMGVISCCLTSILNM.

Belongs to the cation transport ATPase (P-type) (TC 3.A.3) family. Type V subfamily.

Its subcellular location is the endoplasmic reticulum membrane. The protein resides in the golgi apparatus membrane. The catalysed reaction is ATP + H2O = ADP + phosphate + H(+). Plays a role in regulating calcium and manganese homeostasis responsible for cell cycle progression. The chain is Cation-transporting ATPase 5 (cta5) from Schizosaccharomyces pombe (strain 972 / ATCC 24843) (Fission yeast).